The primary structure comprises 196 residues: Imidazole glycerol phosphate synthase subunit HisH (196 aa).

Positions 2-196 (KATLINYGVG…LRNFYSWVKR (195 aa)) constitute a Glutamine amidotransferase type-1 domain. Residue cysteine 76 is the Nucleophile of the active site. Residues histidine 175 and glutamate 177 contribute to the active site.

As to quaternary structure, heterodimer of HisH and HisF.

Its subcellular location is the cytoplasm. It carries out the reaction 5-[(5-phospho-1-deoxy-D-ribulos-1-ylimino)methylamino]-1-(5-phospho-beta-D-ribosyl)imidazole-4-carboxamide + L-glutamine = D-erythro-1-(imidazol-4-yl)glycerol 3-phosphate + 5-amino-1-(5-phospho-beta-D-ribosyl)imidazole-4-carboxamide + L-glutamate + H(+). It catalyses the reaction L-glutamine + H2O = L-glutamate + NH4(+). It participates in amino-acid biosynthesis; L-histidine biosynthesis; L-histidine from 5-phospho-alpha-D-ribose 1-diphosphate: step 5/9. IGPS catalyzes the conversion of PRFAR and glutamine to IGP, AICAR and glutamate. The HisH subunit catalyzes the hydrolysis of glutamine to glutamate and ammonia as part of the synthesis of IGP and AICAR. The resulting ammonia molecule is channeled to the active site of HisF. This is Imidazole glycerol phosphate synthase subunit HisH from Sulfurisphaera tokodaii (strain DSM 16993 / JCM 10545 / NBRC 100140 / 7) (Sulfolobus tokodaii).